The primary structure comprises 147 residues: Sec-independent protein translocase protein TatB (147 aa).

A helical transmembrane segment spans residues 1 to 21 (MFDISFSEILVIAAVALIVIG). Positions 67–88 (EETGRSIENSVHTELDKFRETV) are enriched in basic and acidic residues. The tract at residues 67–147 (EETGRSIENS…GVNRERETAE (81 aa)) is disordered. Residues 103–117 (APAGESSPPQNSSPA) are compositionally biased toward low complexity.

Belongs to the TatB family. In terms of assembly, the Tat system comprises two distinct complexes: a TatABC complex, containing multiple copies of TatA, TatB and TatC subunits, and a separate TatA complex, containing only TatA subunits. Substrates initially bind to the TatABC complex, which probably triggers association of the separate TatA complex to form the active translocon.

The protein resides in the cell inner membrane. Functionally, part of the twin-arginine translocation (Tat) system that transports large folded proteins containing a characteristic twin-arginine motif in their signal peptide across membranes. Together with TatC, TatB is part of a receptor directly interacting with Tat signal peptides. TatB may form an oligomeric binding site that transiently accommodates folded Tat precursor proteins before their translocation. In Nitrosospira multiformis (strain ATCC 25196 / NCIMB 11849 / C 71), this protein is Sec-independent protein translocase protein TatB.